Here is a 683-residue protein sequence, read N- to C-terminus: DNA ligase (683 aa).

NAD(+)-binding positions include 43-47 (DAEYD), 92-93 (SL), and glutamate 125. Residue lysine 127 is the N6-AMP-lysine intermediate of the active site. Arginine 148, glutamate 185, lysine 303, and lysine 327 together coordinate NAD(+). Zn(2+) is bound by residues cysteine 421, cysteine 424, cysteine 439, and cysteine 445. The region spanning 604–683 (IADNPLKGKN…QEFIALTGEN (80 aa)) is the BRCT domain.

The protein belongs to the NAD-dependent DNA ligase family. LigA subfamily. It depends on Mg(2+) as a cofactor. Mn(2+) is required as a cofactor.

The catalysed reaction is NAD(+) + (deoxyribonucleotide)n-3'-hydroxyl + 5'-phospho-(deoxyribonucleotide)m = (deoxyribonucleotide)n+m + AMP + beta-nicotinamide D-nucleotide.. In terms of biological role, DNA ligase that catalyzes the formation of phosphodiester linkages between 5'-phosphoryl and 3'-hydroxyl groups in double-stranded DNA using NAD as a coenzyme and as the energy source for the reaction. It is essential for DNA replication and repair of damaged DNA. This chain is DNA ligase, found in Actinobacillus pleuropneumoniae serotype 5b (strain L20).